The following is a 96-amino-acid chain: Protein Vpr (96 aa).

The interval 1–42 (MEQAPEDQGPPREPYQEWALETLEELKNEAVRHFPRPWLHQL) is homooligomerization. Ser-79 and Ser-96 each carry phosphoserine; by host.

Belongs to the HIV-1 VPR protein family. Homooligomer, may form homodimer. Interacts with p6-gag region of the Pr55 Gag precursor protein through a (Leu-X-X)4 motif near the C-terminus of the P6gag protein. Interacts with host UNG. May interact with host RAD23A/HHR23A. Interacts with host VPRBP/DCAF1, leading to hijack the CUL4A-RBX1-DDB1-DCAF1/VPRBP complex, mediating ubiquitination of host proteins such as TERT and ZGPAT and arrest of the cell cycle in G2 phase. In terms of processing, phosphorylated on several residues by host. These phosphorylations regulate VPR activity for the nuclear import of the HIV-1 pre-integration complex.

It localises to the virion. The protein localises to the host nucleus. The protein resides in the host extracellular space. In terms of biological role, during virus replication, may deplete host UNG protein, and incude G2-M cell cycle arrest. Acts by targeting specific host proteins for degradation by the 26S proteasome, through association with the cellular CUL4A-DDB1 E3 ligase complex by direct interaction with host VPRPB/DCAF-1. Cell cycle arrest reportedly occurs within hours of infection and is not blocked by antiviral agents, suggesting that it is initiated by the VPR carried into the virion. Additionally, VPR induces apoptosis in a cell cycle dependent manner suggesting that these two effects are mechanistically linked. Detected in the serum and cerebrospinal fluid of AIDS patient, VPR may also induce cell death to bystander cells. During virus entry, plays a role in the transport of the viral pre-integration (PIC) complex to the host nucleus. This function is crucial for viral infection of non-dividing macrophages. May act directly at the nuclear pore complex, by binding nucleoporins phenylalanine-glycine (FG)-repeat regions. This Pan (chimpanzees) protein is Protein Vpr.